The primary structure comprises 490 residues: Protoporphyrinogen oxidase (490 aa).

Residues 7–12, 32–33, W40, 61–64, and 466–468 each bind FAD; these read GGGIAG, EK, GPRT, and VSI.

This sequence belongs to the protoporphyrinogen/coproporphyrinogen oxidase family. Protoporphyrinogen oxidase subfamily. FAD is required as a cofactor.

The protein localises to the mitochondrion. It carries out the reaction protoporphyrinogen IX + 3 O2 = protoporphyrin IX + 3 H2O2. It functions in the pathway porphyrin-containing compound metabolism; protoporphyrin-IX biosynthesis; protoporphyrin-IX from protoporphyrinogen-IX: step 1/1. Catalyzes the 6-electron oxidation of protoporphyrinogen-IX to form protoporphyrin-IX. This Schizosaccharomyces pombe (strain 972 / ATCC 24843) (Fission yeast) protein is Protoporphyrinogen oxidase (hem14).